Here is a 334-residue protein sequence, read N- to C-terminus: Holliday junction branch migration complex subunit RuvB (334 aa).

Residues 4-184 are large ATPase domain (RuvB-L); sequence ADRLIQPQDL…FGIPLRLEFY (181 aa). ATP contacts are provided by residues Arg-24, Gly-65, Lys-68, Thr-69, Thr-70, 131-133, Arg-174, Tyr-184, and Arg-221; that span reads EDY. Mg(2+) is bound at residue Thr-69. The small ATPAse domain (RuvB-S) stretch occupies residues 185 to 255; the sequence is NVRDLSSIVA…VAQSALDLLD (71 aa). The interval 258–334 is head domain (RuvB-H); the sequence is SEGFDYMDRK…YSHFDLIKPD (77 aa). Positions 294, 313, and 318 each coordinate DNA.

This sequence belongs to the RuvB family. Homohexamer. Forms an RuvA(8)-RuvB(12)-Holliday junction (HJ) complex. HJ DNA is sandwiched between 2 RuvA tetramers; dsDNA enters through RuvA and exits via RuvB. An RuvB hexamer assembles on each DNA strand where it exits the tetramer. Each RuvB hexamer is contacted by two RuvA subunits (via domain III) on 2 adjacent RuvB subunits; this complex drives branch migration. In the full resolvosome a probable DNA-RuvA(4)-RuvB(12)-RuvC(2) complex forms which resolves the HJ.

The protein localises to the cytoplasm. The enzyme catalyses ATP + H2O = ADP + phosphate + H(+). Functionally, the RuvA-RuvB-RuvC complex processes Holliday junction (HJ) DNA during genetic recombination and DNA repair, while the RuvA-RuvB complex plays an important role in the rescue of blocked DNA replication forks via replication fork reversal (RFR). RuvA specifically binds to HJ cruciform DNA, conferring on it an open structure. The RuvB hexamer acts as an ATP-dependent pump, pulling dsDNA into and through the RuvAB complex. RuvB forms 2 homohexamers on either side of HJ DNA bound by 1 or 2 RuvA tetramers; 4 subunits per hexamer contact DNA at a time. Coordinated motions by a converter formed by DNA-disengaged RuvB subunits stimulates ATP hydrolysis and nucleotide exchange. Immobilization of the converter enables RuvB to convert the ATP-contained energy into a lever motion, pulling 2 nucleotides of DNA out of the RuvA tetramer per ATP hydrolyzed, thus driving DNA branch migration. The RuvB motors rotate together with the DNA substrate, which together with the progressing nucleotide cycle form the mechanistic basis for DNA recombination by continuous HJ branch migration. Branch migration allows RuvC to scan DNA until it finds its consensus sequence, where it cleaves and resolves cruciform DNA. In Shewanella amazonensis (strain ATCC BAA-1098 / SB2B), this protein is Holliday junction branch migration complex subunit RuvB.